The chain runs to 1055 residues: DNA-directed RNA polymerase subunit beta' (1055 aa).

Residues cysteine 60, cysteine 62, cysteine 75, and cysteine 78 each coordinate Zn(2+). 3 residues coordinate Mg(2+): aspartate 449, aspartate 451, and aspartate 453. Residues cysteine 818, cysteine 892, cysteine 899, and cysteine 902 each contribute to the Zn(2+) site.

This sequence belongs to the RNA polymerase beta' chain family. The RNAP catalytic core consists of 2 alpha, 1 beta, 1 beta' and 1 omega subunit. When a sigma factor is associated with the core the holoenzyme is formed, which can initiate transcription. It depends on Mg(2+) as a cofactor. Requires Zn(2+) as cofactor.

The catalysed reaction is RNA(n) + a ribonucleoside 5'-triphosphate = RNA(n+1) + diphosphate. Functionally, DNA-dependent RNA polymerase catalyzes the transcription of DNA into RNA using the four ribonucleoside triphosphates as substrates. In Pediococcus acidilactici, this protein is DNA-directed RNA polymerase subunit beta'.